We begin with the raw amino-acid sequence, 317 residues long: ATP synthase gamma chain (317 aa).

This sequence belongs to the ATPase gamma chain family. F-type ATPases have 2 components, CF(1) - the catalytic core - and CF(0) - the membrane proton channel. CF(1) has five subunits: alpha(3), beta(3), gamma(1), delta(1), epsilon(1). CF(0) has three main subunits: a, b and c.

It localises to the cellular thylakoid membrane. In terms of biological role, produces ATP from ADP in the presence of a proton gradient across the membrane. The gamma chain is believed to be important in regulating ATPase activity and the flow of protons through the CF(0) complex. In Synechococcus sp. (strain CC9311), this protein is ATP synthase gamma chain.